The following is a 585-amino-acid chain: Probable multidrug resistance ABC transporter ATP-binding/permease protein YheI (585 aa).

The ABC transmembrane type-1 domain maps to 19-304 (YTIAIVLLLA…IGELINVMQR (286 aa)). Transmembrane regions (helical) follow at residues 21-41 (IAIV…KLLG), 57-77 (LLFY…MSYF), 127-147 (AVSL…MFMM), 149-169 (IFLT…IIPL), 249-269 (VKLL…FLVF), and 279-299 (VSFN…GELI). One can recognise an ABC transporter domain in the interval 337 to 572 (IVFSHVSFTY…NGWYREQYER (236 aa)). An ATP-binding site is contributed by 371 to 378 (GKTGSGKT).

Belongs to the ABC transporter superfamily. As to quaternary structure, heterodimer composed of YheH and YheI.

Its subcellular location is the cell membrane. Inhibited by ortho-vanadate. Its function is as follows. Involved in the transport of four structurally unrelated drugs, including doxorubicin and mitoxantrone. Transmembrane domains (TMD) form a pore in the membrane and the ATP-binding domain (NBD) is responsible for energy generation. The polypeptide is Probable multidrug resistance ABC transporter ATP-binding/permease protein YheI (yheI) (Bacillus subtilis (strain 168)).